Consider the following 374-residue polypeptide: DNA replication and repair protein RecF (374 aa).

30–37 (GPNAQGKT) serves as a coordination point for ATP.

This sequence belongs to the RecF family.

It localises to the cytoplasm. Functionally, the RecF protein is involved in DNA metabolism; it is required for DNA replication and normal SOS inducibility. RecF binds preferentially to single-stranded, linear DNA. It also seems to bind ATP. In Lactobacillus gasseri (strain ATCC 33323 / DSM 20243 / BCRC 14619 / CIP 102991 / JCM 1131 / KCTC 3163 / NCIMB 11718 / NCTC 13722 / AM63), this protein is DNA replication and repair protein RecF.